Here is an 85-residue protein sequence, read N- to C-terminus: MPQKPLKVTKKAKDPRRVTKKQKNLRKAAPLQLKSKKKSLQHLKKLKKSSSLTETTERLVASKVGHLELLRGTRKELEKGKKNSK.

Disordered regions lie at residues 1–28 and 35–54; these read MPQKPLKVTKKAKDPRRVTKKQKNLRKA and SKKKSLQHLKKLKKSSSLTE. Residues 35–48 are compositionally biased toward basic residues; sequence SKKKSLQHLKKLKK.

The protein localises to the nucleus. This is an uncharacterized protein from Saccharomyces cerevisiae (strain ATCC 204508 / S288c) (Baker's yeast).